The primary structure comprises 327 residues: Zinc finger protein 444 (327 aa).

Residue Met1 is modified to N-acetylmethionine. Lys8 is covalently cross-linked (Glycyl lysine isopeptide (Lys-Gly) (interchain with G-Cter in SUMO2)). Ser18 and Ser104 each carry phosphoserine. In terms of domain architecture, SCAN box spans Trp20–Ser104. The interval Pro101–Ala171 is disordered. Positions Asp106–Thr118 are enriched in polar residues. Residues Pro134–Gly148 are compositionally biased toward low complexity. 2 C2H2-type zinc fingers span residues Thr179–His201 and His207–His229. Lys190 participates in a covalent cross-link: Glycyl lysine isopeptide (Lys-Gly) (interchain with G-Cter in SUMO2). The tract at residues Glu220 to Leu243 is disordered. Position 235 is a phosphoserine (Ser235). C2H2-type zinc fingers lie at residues His250–His272 and Phe278–His300. Residues Ala305–Gly314 are compositionally biased toward low complexity. Residues Ala305–Gly327 are disordered.

The protein belongs to the krueppel C2H2-type zinc-finger protein family.

The protein localises to the nucleus. In terms of biological role, transcriptional regulator. Binds to the 5'-flanking critical region of the SCARF1 promoter. This is Zinc finger protein 444 (ZNF444) from Homo sapiens (Human).